A 152-amino-acid chain; its full sequence is Protein NrdI (152 aa).

This sequence belongs to the NrdI family.

Its function is as follows. Probably involved in ribonucleotide reductase function. This Mycolicibacterium vanbaalenii (strain DSM 7251 / JCM 13017 / BCRC 16820 / KCTC 9966 / NRRL B-24157 / PYR-1) (Mycobacterium vanbaalenii) protein is Protein NrdI.